The following is a 424-amino-acid chain: Interferon regulatory factor 8 (424 aa).

Positions 7 to 114 (GRRLRQWLIE…EPYKVYRIVP (108 aa)) form a DNA-binding region, IRF tryptophan pentad repeat.

Belongs to the IRF family. As to quaternary structure, interacts with COPS2. Interacts (via C-terminus) with TRIM21 (via C-terminus). Interacts with the BATF-JUNB heterodimer. Interacts with BATF (via bZIP domain); the interaction is direct. Interacts with SPI1. Ubiquitinated. Ubiquitination by TRIM21 in macrophages, a process that is strongly increased upon interferon gamma stimulation, leds to the enhanced transcriptional activity of target cytokine genes. Ubiquitination leads to its degradation by the proteasome. In terms of processing, sumoylated with SUMO3. Desumoylated by SENP1. In terms of tissue distribution, expressed in bone marrow macrophages (at protein level). Mainly expressed in lymphoid tissues. Predominantly expressed in CD8(+)-expressing dendritic cells.

It localises to the nucleus. It is found in the cytoplasm. Functionally, transcription factor that specifically binds to the upstream regulatory region of type I interferon (IFN) and IFN-inducible MHC class I genes (the interferon consensus sequence (ICS)). Can both act as a transcriptional activator or repressor. Plays a negative regulatory role in cells of the immune system. Involved in CD8(+) dendritic cell differentiation by forming a complex with the BATF-JUNB heterodimer in immune cells, leading to recognition of AICE sequence (5'-TGAnTCA/GAAA-3'), an immune-specific regulatory element, followed by cooperative binding of BATF and IRF8 and activation of genes. Required for the development of plasmacytoid dendritic cells (pDCs), which produce most of the type I IFN in response to viral infection. Positively regulates macroautophagy in dendritic cells. Acts as a transcriptional repressor of osteoclast differentiation factors such as NFATC1 and EEIG1. In Mus musculus (Mouse), this protein is Interferon regulatory factor 8.